Reading from the N-terminus, the 362-residue chain is Class I histocompatibility antigen, Gogo-B*0103 alpha chain (362 aa).

Positions 1–24 (MRVTAPRTLLLLLSAALALTETWA) are cleaved as a signal peptide. Residues 25-114 (GSHSMRYFDT…ALRYYNQSEA (90 aa)) form an alpha-1 region. The Extracellular segment spans residues 25-308 (GSHSMRYFDT…EPSSQSTIPI (284 aa)). N-linked (GlcNAc...) asparagine glycosylation occurs at N110. The interval 115–206 (GSHTIQWMYG…ENGRETLQRA (92 aa)) is alpha-2. 2 disulfides stabilise this stretch: C125/C188 and C227/C283. The tract at residues 207–298 (DTPKTHVTHH…GLPKPLTLRW (92 aa)) is alpha-3. The 87-residue stretch at 209 to 295 (PKTHVTHHPI…QHEGLPKPLT (87 aa)) folds into the Ig-like C1-type domain. The segment at 299–308 (EPSSQSTIPI) is connecting peptide. A helical transmembrane segment spans residues 309-332 (VGIVAGLAVLAVVVIGAVVTAVIC). Over 333 to 362 (RRKSSGGKGGSYSQAASSDSAQGSDVSLTA) the chain is Cytoplasmic. A disordered region spans residues 335-362 (KSSGGKGGSYSQAASSDSAQGSDVSLTA). The span at 343–362 (SYSQAASSDSAQGSDVSLTA) shows a compositional bias: low complexity.

This sequence belongs to the MHC class I family. As to quaternary structure, heterodimer of an alpha chain and a beta chain (beta-2-microglobulin).

The protein resides in the membrane. In terms of biological role, involved in the presentation of foreign antigens to the immune system. In Gorilla gorilla gorilla (Western lowland gorilla), this protein is Class I histocompatibility antigen, Gogo-B*0103 alpha chain.